We begin with the raw amino-acid sequence, 99 residues long: MSEESMDTGFLVINTKDKQDKTVKKPLRILIKKSLENYFLHLDKSQCVSNLYQLVLSELEQPLLDIIMQHTRGNQTRAASIMGINRSTLRKKLKRYGMN.

Residues 75 to 94 (QTRAASIMGINRSTLRKKLK) constitute a DNA-binding region (H-T-H motif).

It belongs to the transcriptional regulatory Fis family. As to quaternary structure, homodimer.

Functionally, activates ribosomal RNA transcription. Plays a direct role in upstream activation of rRNA promoters. This Buchnera aphidicola subsp. Schizaphis graminum (strain Sg) protein is DNA-binding protein Fis.